The chain runs to 552 residues: HTH-type transcriptional regulator SgrR (552 aa).

In terms of domain architecture, HTH marR-type spans 1-116; that stretch reads MPSGRLQQQF…LISHLGRSFR (116 aa). Positions 26–49 form a DNA-binding region, H-T-H motif; it reads LNELADLLNCSRRHMRTLLNTMQA. Residues 163–493 form a solute-binding region; that stretch reads ELEADIAHHW…RDWQDDAAQW (331 aa).

Activates the small RNA gene sgrS under glucose-phosphate stress conditions as well as yfdZ. Represses its own transcription under both stress and non-stress conditions. Might act as a sensor of the intracellular accumulation of phosphoglucose by binding these molecules in its C-terminal solute-binding domain. This Salmonella typhi protein is HTH-type transcriptional regulator SgrR.